A 418-amino-acid polypeptide reads, in one-letter code: DnaJ protein homolog 2 (418 aa).

The J domain occupies 11–76; sequence NTKYYEVLGV…REIYDQYGEE (66 aa). The segment at 135 to 219 adopts a CR-type zinc-finger fold; it reads GTSKKLSLSR…CKGEKVVQQK (85 aa). CXXCXGXG motif repeat units lie at residues 148 to 155, 164 to 171, 191 to 198, and 207 to 214; these read CTKCKGKG, CASCQGSG, CNECKGTG, and CPQCKGEK. The disordered stretch occupies residues 382–418; sequence VNIEEEMRRKQHQQAQEAYDEDDEGHGGAQRVQCAQQ. Cysteine methyl ester is present on Cys-415. Residue Cys-415 is the site of S-farnesyl cysteine attachment. Positions 416-418 are cleaved as a propeptide — removed in mature form; the sequence is AQQ.

It is found in the membrane. Functionally, plays a continuous role in plant development probably in the structural organization of compartments. This Allium porrum (Leek) protein is DnaJ protein homolog 2 (LDJ2).